The chain runs to 289 residues: Shikimate dehydrogenase (NADP(+)) (289 aa).

Residues 19-21 (SLS) and Thr66 each bind shikimate. Residue Lys70 is the Proton acceptor of the active site. Shikimate is bound by residues Asn91 and Asp106. NADP(+)-binding positions include 131–135 (GNGGA) and Leu229. A shikimate-binding site is contributed by Tyr231. Gly252 lines the NADP(+) pocket.

It belongs to the shikimate dehydrogenase family. Homodimer.

It carries out the reaction shikimate + NADP(+) = 3-dehydroshikimate + NADPH + H(+). The protein operates within metabolic intermediate biosynthesis; chorismate biosynthesis; chorismate from D-erythrose 4-phosphate and phosphoenolpyruvate: step 4/7. In terms of biological role, involved in the biosynthesis of the chorismate, which leads to the biosynthesis of aromatic amino acids. Catalyzes the reversible NADPH linked reduction of 3-dehydroshikimate (DHSA) to yield shikimate (SA). The polypeptide is Shikimate dehydrogenase (NADP(+)) (Nostoc sp. (strain PCC 7120 / SAG 25.82 / UTEX 2576)).